A 71-amino-acid polypeptide reads, in one-letter code: UPF0352 protein Spea_1764 (71 aa).

Belongs to the UPF0352 family.

The chain is UPF0352 protein Spea_1764 from Shewanella pealeana (strain ATCC 700345 / ANG-SQ1).